The primary structure comprises 261 residues: uncharacterized protein (261 aa).

This is an uncharacterized protein from Methanocaldococcus jannaschii (strain ATCC 43067 / DSM 2661 / JAL-1 / JCM 10045 / NBRC 100440) (Methanococcus jannaschii).